We begin with the raw amino-acid sequence, 702 residues long: Autophagy-related protein 9 (702 aa).

Residues 1 to 205 (MFYQPAQNKK…GKGLSCIIVH (205 aa)) are Cytoplasmic-facing. Residues 35–128 (QESLDSDEDE…SKQKPALPNF (94 aa)) are disordered. Acidic residues predominate over residues 38–47 (LDSDEDESSP). Residues 94–107 (SSKVPSKHPSPSFP) are compositionally biased toward low complexity. Positions 108–120 (ETTSLRNLQNGSK) are enriched in polar residues. A helical transmembrane segment spans residues 206–223 (RLFQILTVSFVIGFTTFI). Residues 224–251 (TSCIDWPAVTPHGSLAGVTKSQCIAQMS) are Lumenal-facing. A helical membrane pass occupies residues 252 to 270 (PITYLVLWLFLSFLLALWI). The Cytoplasmic portion of the chain corresponds to 271 to 421 (YYLTDIPRLW…RRRFIVAGFL (151 aa)). The stretch at 422 to 446 (NCLFAPIVAIYLVIHNFFRYFNEYH) is an intramembrane region. Topologically, residues 447-496 (KNPGALSTRRYTPLALWTFREYNELQHFFDERINDSYAAASHYVSQFPDF) are cytoplasmic. Residues 497–522 (NMIRLFKYISFILGSFTAILVIITVF) form a helical membrane-spanning segment. Residues 523–537 (DPELMVTFEITKDRS) are Lumenal-facing. Residues 538–555 (VLFYLGLFGSLIAVSRSI) traverse the membrane as a helical segment. At 556 to 603 (IPDETLVFAPEKALRRVITFTHYMPGWWSDNMHSKAVQQEFCSLYSYR) the chain is on the cytoplasmic side. An intramembrane segment occupies 604 to 624 (IVNLLWEILGILLTPVLLFFT). Over 625–702 (FPSCSQDIVD…NTEAPRRDLR (78 aa)) the chain is Cytoplasmic.

This sequence belongs to the ATG9 family. As to quaternary structure, homotrimer; forms a homotrimer with a central pore that forms a path between the two membrane leaflets. Interacts with ctl1. In terms of processing, phosphorylated by atg1. Atg1 phosphorylation is required for preautophagosome elongation.

It localises to the preautophagosomal structure membrane. The protein localises to the cytoplasmic vesicle membrane. Its subcellular location is the golgi apparatus membrane. The protein resides in the endoplasmic reticulum membrane. The catalysed reaction is a 1,2-diacyl-sn-glycero-3-phosphocholine(in) = a 1,2-diacyl-sn-glycero-3-phosphocholine(out). The enzyme catalyses a 1,2-diacyl-sn-glycero-3-phospho-L-serine(in) = a 1,2-diacyl-sn-glycero-3-phospho-L-serine(out). It catalyses the reaction a 1,2-diacyl-sn-glycero-3-phosphoethanolamine(in) = a 1,2-diacyl-sn-glycero-3-phosphoethanolamine(out). It carries out the reaction a 1,2-diacyl-sn-glycero-3-phospho-(1D-myo-inositol-3-phosphate)(in) = a 1,2-diacyl-sn-glycero-3-phospho-(1D-myo-inositol-3-phosphate)(out). Its function is as follows. Phospholipid scramblase involved in autophagy and cytoplasm to vacuole transport (Cvt) vesicle formation. Cycles between the preautophagosomal structure/phagophore assembly site (PAS) and the cytoplasmic vesicle pool and supplies membrane for the growing autophagosome. Lipid scramblase activity plays a key role in preautophagosomal structure/phagophore assembly by distributing the phospholipids that arrive through atg2 from the cytoplasmic to the luminal leaflet of the bilayer, thereby driving autophagosomal membrane expansion. Also involved in endoplasmic reticulum-specific autophagic process and is essential for the survival of cells subjected to severe ER stress. Different machineries are required for anterograde trafficking to the PAS during either the Cvt pathway or bulk autophagy and for retrograde trafficking. Has a role in meiosis and sporulation. In Schizosaccharomyces pombe (strain 972 / ATCC 24843) (Fission yeast), this protein is Autophagy-related protein 9.